The chain runs to 431 residues: Serine hydroxymethyltransferase (431 aa).

Residues L128 and 132–134 (GHL) contribute to the (6S)-5,6,7,8-tetrahydrofolate site. K237 bears the N6-(pyridoxal phosphate)lysine mark. E253 contributes to the (6S)-5,6,7,8-tetrahydrofolate binding site.

It belongs to the SHMT family. In terms of assembly, homodimer. Pyridoxal 5'-phosphate serves as cofactor.

The protein resides in the cytoplasm. It catalyses the reaction (6R)-5,10-methylene-5,6,7,8-tetrahydrofolate + glycine + H2O = (6S)-5,6,7,8-tetrahydrofolate + L-serine. The protein operates within one-carbon metabolism; tetrahydrofolate interconversion. It functions in the pathway amino-acid biosynthesis; glycine biosynthesis; glycine from L-serine: step 1/1. In terms of biological role, catalyzes the reversible interconversion of serine and glycine with tetrahydrofolate (THF) serving as the one-carbon carrier. This reaction serves as the major source of one-carbon groups required for the biosynthesis of purines, thymidylate, methionine, and other important biomolecules. Also exhibits THF-independent aldolase activity toward beta-hydroxyamino acids, producing glycine and aldehydes, via a retro-aldol mechanism. The chain is Serine hydroxymethyltransferase from Cereibacter sphaeroides (strain ATCC 17023 / DSM 158 / JCM 6121 / CCUG 31486 / LMG 2827 / NBRC 12203 / NCIMB 8253 / ATH 2.4.1.) (Rhodobacter sphaeroides).